The sequence spans 387 residues: Protein RecA (387 aa).

Residue 78-85 (GPESSGKT) participates in ATP binding. The segment covering 350–369 (QTREVKSIERDPKETKETKS) has biased composition (basic and acidic residues). The segment at 350 to 387 (QTREVKSIERDPKETKETKSKQPVSFSTEAEVDIAVGE) is disordered.

The protein belongs to the RecA family.

It localises to the cytoplasm. In terms of biological role, can catalyze the hydrolysis of ATP in the presence of single-stranded DNA, the ATP-dependent uptake of single-stranded DNA by duplex DNA, and the ATP-dependent hybridization of homologous single-stranded DNAs. It interacts with LexA causing its activation and leading to its autocatalytic cleavage. The chain is Protein RecA from Leptospira meyeri.